We begin with the raw amino-acid sequence, 215 residues long: Adenylate kinase (215 aa).

10–15 (GAGKGT) is a binding site for ATP. An NMP region spans residues 30 to 59 (STGDMLRAAVKAGTELGLKAKSVMDSGGLV). Residues Thr31, Arg36, 57-59 (GLV), 85-88 (GFPR), and Gln92 each bind AMP. Residues 122–159 (GRRVHEASGRVYHTVYNPPKIAGKDDITGEDLVQRKDD) form an LID region. Residues Arg123 and 132–133 (VY) each bind ATP. AMP is bound by residues Arg156 and Arg167. Gly201 lines the ATP pocket.

The protein belongs to the adenylate kinase family. In terms of assembly, monomer.

It is found in the cytoplasm. It catalyses the reaction AMP + ATP = 2 ADP. It participates in purine metabolism; AMP biosynthesis via salvage pathway; AMP from ADP: step 1/1. Catalyzes the reversible transfer of the terminal phosphate group between ATP and AMP. Plays an important role in cellular energy homeostasis and in adenine nucleotide metabolism. The protein is Adenylate kinase of Pseudomonas fluorescens (strain ATCC BAA-477 / NRRL B-23932 / Pf-5).